Consider the following 520-residue polypeptide: MNSKCDVVVVGGGISGLAAAKLLHDSGLNVVVLEARDCVGGRTYTLRNQNVKYVDLGGAYVGPTQNRILRLAKELGLETYRVNDVERQIHHVKGKSYPFRGPFPPAWNPISYLDHNNLWRTMDDMGKEIPSDAPWKAPLAEEWDHMTMKELLNKICWTNCPRQFGTLFVNLCFTAETHEVSALWFLWYVKQCGGTTRIISTTNGGQERKFVGGSGQISERIMNLLGDRVKLQRPVVYIDQTGESVLVETLNHEIYEAKYVISAIPPALGMKIHFKPPLPMMKNQLVSRVPLGSVIKCIVYYKDPFWRKKDFCGTMVIEGEEAPVLYTMDDTKPDGSYAAIIGFIAAHKARKLARLTKEERLKKLCELYAKVLGSKEALKPVHYEEKNWCEEQYSGGCYTAYFPPGIMTQYGRFLRQPVGRIFFAGTETATHWSGYMEGAVEAGERAAREVLNAIGKIPEDEIWQPEPESVDVPAQPITTTFLERHLPSVPGLLRLIRLTTVVSAVALGFLAQKRGLLLRI.

The Cytoplasmic portion of the chain corresponds to 1–489 (MNSKCDVVVV…TFLERHLPSV (489 aa)). Position 52 is an N6-acetyllysine (lysine 52). Cysteine 397 carries the post-translational modification S-8alpha-FAD cysteine. Residues 490–516 (PGLLRLIRLTTVVSAVALGFLAQKRGL) form a helical; Anchor for type IV membrane protein membrane-spanning segment. The Mitochondrial intermembrane portion of the chain corresponds to 517–520 (LLRI).

This sequence belongs to the flavin monoamine oxidase family. Monomer, homo- or heterodimer (containing two subunits of similar size). Each subunit contains a covalently bound flavin. Enzymatically active as monomer. It depends on FAD as a cofactor.

The protein resides in the mitochondrion outer membrane. The catalysed reaction is a secondary aliphatic amine + O2 + H2O = a primary amine + an aldehyde + H2O2. It catalyses the reaction (R)-adrenaline + O2 + H2O = (R)-3,4-dihydroxymandelaldehyde + methylamine + H2O2. It carries out the reaction a primary methyl amine + O2 + H2O = an aldehyde + H2O2 + NH4(+). The enzyme catalyses benzylamine + O2 + H2O = benzaldehyde + H2O2 + NH4(+). The catalysed reaction is dopamine + O2 + H2O = 3,4-dihydroxyphenylacetaldehyde + H2O2 + NH4(+). It catalyses the reaction tyramine + O2 + H2O = (4-hydroxyphenyl)acetaldehyde + H2O2 + NH4(+). It carries out the reaction (R)-noradrenaline + O2 + H2O = (R)-3,4-dihydroxymandelaldehyde + H2O2 + NH4(+). The enzyme catalyses 2-phenylethylamine + O2 + H2O = 2-phenylacetaldehyde + H2O2 + NH4(+). The catalysed reaction is N-acetylputrescine + O2 + H2O = 4-acetamidobutanal + H2O2 + NH4(+). Its function is as follows. Catalyzes the oxidative deamination of primary and some secondary amines such as neurotransmitters, and exogenous amines including the tertiary amine, neurotoxin 1-methyl-4-phenyl-1,2,3,6-tetrahydropyridine (MPTP), with concomitant reduction of oxygen to hydrogen peroxide and participates in the metabolism of neuroactive and vasoactive amines in the central nervous system and peripheral tissues. Preferentially degrades benzylamine and phenylethylamine. The chain is Amine oxidase [flavin-containing] B from Cavia porcellus (Guinea pig).